The chain runs to 438 residues: Asparagine--tRNA ligase (438 aa).

Belongs to the class-II aminoacyl-tRNA synthetase family. Homodimer.

It is found in the cytoplasm. It carries out the reaction tRNA(Asn) + L-asparagine + ATP = L-asparaginyl-tRNA(Asn) + AMP + diphosphate + H(+). This chain is Asparagine--tRNA ligase, found in Thermus thermophilus (strain ATCC 27634 / DSM 579 / HB8).